We begin with the raw amino-acid sequence, 100 residues long: Small ribosomal subunit protein uS14c (100 aa).

It belongs to the universal ribosomal protein uS14 family. Part of the 30S ribosomal subunit.

The protein localises to the plastid. Its subcellular location is the chloroplast. In terms of biological role, binds 16S rRNA, required for the assembly of 30S particles. The sequence is that of Small ribosomal subunit protein uS14c from Chloranthus spicatus (Chulantree).